The following is a 609-amino-acid chain: Aminopeptidase ltah-1.1 (609 aa).

Residues 137-139 (QCQ) and 268-273 (PFGGME) contribute to the substrate site. Histidine 297 serves as a coordination point for Zn(2+). Catalysis depends on glutamate 298, which acts as the Proton acceptor. Zn(2+) contacts are provided by histidine 301 and glutamate 320. Tyrosine 387 serves as the catalytic Proton donor. 564–566 (RMK) is a substrate binding site.

The protein belongs to the peptidase M1 family. Zn(2+) is required as a cofactor.

It is found in the cytoplasm. The enzyme catalyses Release of N-terminal Arg and Lys from oligopeptides when P1' is not Pro. Also acts on arylamides of Arg and Lys.. Functionally, aminopeptidase which preferentially removes N-terminal Arg and Lys residues from peptides and proteins. The chain is Aminopeptidase ltah-1.1 from Caenorhabditis elegans.